The chain runs to 264 residues: Pyridoxine 5'-phosphate synthase (264 aa).

Polar residues predominate over residues Met-1–Lys-21. The segment at Met-1–Lys-22 is disordered. Position 28 (Asn-28) interacts with 3-amino-2-oxopropyl phosphate. A 1-deoxy-D-xylulose 5-phosphate-binding site is contributed by Asp-30–His-31. Arg-39 is a 3-amino-2-oxopropyl phosphate binding site. His-64 acts as the Proton acceptor in catalysis. Arg-66 and His-71 together coordinate 1-deoxy-D-xylulose 5-phosphate. Catalysis depends on Glu-91, which acts as the Proton acceptor. Thr-121 is a binding site for 1-deoxy-D-xylulose 5-phosphate. His-217 (proton donor) is an active-site residue. 3-amino-2-oxopropyl phosphate-binding positions include Gly-218 and Gly-239–His-240.

Belongs to the PNP synthase family. As to quaternary structure, homooctamer; tetramer of dimers.

It is found in the cytoplasm. It carries out the reaction 3-amino-2-oxopropyl phosphate + 1-deoxy-D-xylulose 5-phosphate = pyridoxine 5'-phosphate + phosphate + 2 H2O + H(+). Its pathway is cofactor biosynthesis; pyridoxine 5'-phosphate biosynthesis; pyridoxine 5'-phosphate from D-erythrose 4-phosphate: step 5/5. Catalyzes the complicated ring closure reaction between the two acyclic compounds 1-deoxy-D-xylulose-5-phosphate (DXP) and 3-amino-2-oxopropyl phosphate (1-amino-acetone-3-phosphate or AAP) to form pyridoxine 5'-phosphate (PNP) and inorganic phosphate. The protein is Pyridoxine 5'-phosphate synthase of Psychrobacter cryohalolentis (strain ATCC BAA-1226 / DSM 17306 / VKM B-2378 / K5).